Reading from the N-terminus, the 362-residue chain is Probable choline-phosphate cytidylyltransferase (362 aa).

Over residues 1–37 the composition is skewed to basic and acidic residues; the sequence is MGEEGIKINDTHKRRIDEVEPSEKEDNVERQTKKYNF. The tract at residues 1-79 is disordered; it reads MGEEGIKIND…VSPVEEEPRD (79 aa). CTP contacts are provided by residues 109–117 and lysine 147; that span reads VFDLFHIGH. Residues lysine 147 and tryptophan 176 each contribute to the substrate site. CTP contacts are provided by residues 193-194, tyrosine 198, and 221-225; these read HD and RTEGV. Positions 308–362 are disordered; it reads KNPLHGSSEPSSPGPTGFLGGINRWMQRRSSSHYDLPRVGNEIAASSSSATEENH. Low complexity-rich tracts occupy residues 313-323 and 351-362; these read GSSEPSSPGPT and AASSSSATEENH. A phosphoserine mark is found at serine 315 and serine 319. Residue threonine 323 is modified to Phosphothreonine. At serine 355 the chain carries Phosphoserine.

It belongs to the cytidylyltransferase family.

The protein localises to the nucleus. The catalysed reaction is phosphocholine + CTP + H(+) = CDP-choline + diphosphate. This is Probable choline-phosphate cytidylyltransferase from Schizosaccharomyces pombe (strain 972 / ATCC 24843) (Fission yeast).